The following is a 470-amino-acid chain: 3-isopropylmalate dehydratase large subunit (470 aa).

3 residues coordinate [4Fe-4S] cluster: Cys351, Cys411, and Cys414.

This sequence belongs to the aconitase/IPM isomerase family. LeuC type 1 subfamily. As to quaternary structure, heterodimer of LeuC and LeuD. [4Fe-4S] cluster is required as a cofactor.

The enzyme catalyses (2R,3S)-3-isopropylmalate = (2S)-2-isopropylmalate. The protein operates within amino-acid biosynthesis; L-leucine biosynthesis; L-leucine from 3-methyl-2-oxobutanoate: step 2/4. Catalyzes the isomerization between 2-isopropylmalate and 3-isopropylmalate, via the formation of 2-isopropylmaleate. The protein is 3-isopropylmalate dehydratase large subunit of Rhodopseudomonas palustris (strain BisB5).